The following is a 198-amino-acid chain: Prolactin (198 aa).

Intrachain disulfides connect cysteine 4–cysteine 11, cysteine 58–cysteine 173, and cysteine 190–cysteine 198.

The protein belongs to the somatotropin/prolactin family. Pituitary gland.

The protein localises to the secreted. The polypeptide is Prolactin (Chelonia mydas (Green sea-turtle)).